The following is a 671-amino-acid chain: UvrABC system protein B (671 aa).

The Helicase ATP-binding domain maps to 25–412; it reads EGIDAGLAHQ…AGRVVEQVVR (388 aa). Residue 38–45 participates in ATP binding; the sequence is GVTGSGKT. The short motif at 91–114 is the Beta-hairpin element; that stretch reads YYDYYQPEAYVPSSDTFIEKDASI. Positions 429–595 constitute a Helicase C-terminal domain; the sequence is QVDDLLSEIH…GVFKDVADIM (167 aa). The interval 600–624 is disordered; it reads VPGSRSKKRKGMAKAAEENARYENE. Over residues 614-624 the composition is skewed to basic and acidic residues; the sequence is AAEENARYENE. One can recognise a UVR domain in the interval 632 to 667; that stretch reads NKRIRQLEEKMYQLARDLEFEAAAQMRDEIGKLRER.

It belongs to the UvrB family. Forms a heterotetramer with UvrA during the search for lesions. Interacts with UvrC in an incision complex.

The protein localises to the cytoplasm. Functionally, the UvrABC repair system catalyzes the recognition and processing of DNA lesions. A damage recognition complex composed of 2 UvrA and 2 UvrB subunits scans DNA for abnormalities. Upon binding of the UvrA(2)B(2) complex to a putative damaged site, the DNA wraps around one UvrB monomer. DNA wrap is dependent on ATP binding by UvrB and probably causes local melting of the DNA helix, facilitating insertion of UvrB beta-hairpin between the DNA strands. Then UvrB probes one DNA strand for the presence of a lesion. If a lesion is found the UvrA subunits dissociate and the UvrB-DNA preincision complex is formed. This complex is subsequently bound by UvrC and the second UvrB is released. If no lesion is found, the DNA wraps around the other UvrB subunit that will check the other stand for damage. This is UvrABC system protein B from Pseudomonas savastanoi pv. phaseolicola (strain 1448A / Race 6) (Pseudomonas syringae pv. phaseolicola (strain 1448A / Race 6)).